Here is a 315-residue protein sequence, read N- to C-terminus: Methionyl-tRNA formyltransferase (315 aa).

Ser113–Pro116 lines the (6S)-5,6,7,8-tetrahydrofolate pocket.

It belongs to the Fmt family.

The catalysed reaction is L-methionyl-tRNA(fMet) + (6R)-10-formyltetrahydrofolate = N-formyl-L-methionyl-tRNA(fMet) + (6S)-5,6,7,8-tetrahydrofolate + H(+). Attaches a formyl group to the free amino group of methionyl-tRNA(fMet). The formyl group appears to play a dual role in the initiator identity of N-formylmethionyl-tRNA by promoting its recognition by IF2 and preventing the misappropriation of this tRNA by the elongation apparatus. The chain is Methionyl-tRNA formyltransferase from Aliivibrio fischeri (strain ATCC 700601 / ES114) (Vibrio fischeri).